Consider the following 276-residue polypeptide: Diaminopimelate epimerase (276 aa).

Positions 13, 46, and 66 each coordinate substrate. The active-site Proton donor is the C75. Residues 76–77 (GN), N159, N192, and 210–211 (ER) each bind substrate. Residue C219 is the Proton acceptor of the active site. 220–221 (GT) contributes to the substrate binding site.

It belongs to the diaminopimelate epimerase family. Homodimer.

Its subcellular location is the cytoplasm. The catalysed reaction is (2S,6S)-2,6-diaminopimelate = meso-2,6-diaminopimelate. Its pathway is amino-acid biosynthesis; L-lysine biosynthesis via DAP pathway; DL-2,6-diaminopimelate from LL-2,6-diaminopimelate: step 1/1. Its function is as follows. Catalyzes the stereoinversion of LL-2,6-diaminopimelate (L,L-DAP) to meso-diaminopimelate (meso-DAP), a precursor of L-lysine and an essential component of the bacterial peptidoglycan. In Stutzerimonas stutzeri (strain A1501) (Pseudomonas stutzeri), this protein is Diaminopimelate epimerase.